A 445-amino-acid polypeptide reads, in one-letter code: MSKKLYIKTYGCQMNVYDSVKIQDLLYPFGYESTEDIKEADIIILNTCHIREKAAEKTYSELGRIKKLQNTRKQEGLNPAIIVVAGCVAQAEGEVIFTRTPYVDIVVGPQSYYNLPELISKVVRHEKHLIDLDFVEEAKFDNLPEQLYTQGASSFISVQEGCDKFCTFCVVPYTRGAEFSRSVEQVYRESLKVVSNDTKEIILLGQNVNAYHGKGPKDKIFTLADLLKHLAQIPNLERLRYMTSHPIDMTDDLIKLHGTEPKLMPFLHLPVQSGSNKILKAMNRKHDRDYYFNIINRLREARSDIVLSSDFIVGFPGETEKDFEDTLDLVQRVKYGQCYSFKYSPRPGTPGAIRTDQIPEHIKSKRLTILQKELATQQLAFNESCVGSTMKVLFDRDGKFEDQIIGKTPYMQSVYIHNPNKSLLGKIVDVIITKAALNSLTGEIL.

The region spanning Lys3–Arg124 is the MTTase N-terminal domain. The [4Fe-4S] cluster site is built by Cys12, Cys48, Cys87, Cys162, Cys166, and Cys169. A Radical SAM core domain is found at Tyr148–Ala380. The TRAM domain maps to Glu383–Leu445.

It belongs to the methylthiotransferase family. MiaB subfamily. Monomer. The cofactor is [4Fe-4S] cluster.

It localises to the cytoplasm. It catalyses the reaction N(6)-dimethylallyladenosine(37) in tRNA + (sulfur carrier)-SH + AH2 + 2 S-adenosyl-L-methionine = 2-methylsulfanyl-N(6)-dimethylallyladenosine(37) in tRNA + (sulfur carrier)-H + 5'-deoxyadenosine + L-methionine + A + S-adenosyl-L-homocysteine + 2 H(+). Functionally, catalyzes the methylthiolation of N6-(dimethylallyl)adenosine (i(6)A), leading to the formation of 2-methylthio-N6-(dimethylallyl)adenosine (ms(2)i(6)A) at position 37 in tRNAs that read codons beginning with uridine. This is tRNA-2-methylthio-N(6)-dimethylallyladenosine synthase from Rickettsia typhi (strain ATCC VR-144 / Wilmington).